A 264-amino-acid polypeptide reads, in one-letter code: MKKLKLHGFNNLTKSLSFCIYDICYAKTAEERDGYIAYIDELYNANRLTEILSETCSIIGANILNIARQDYEPQGASVTILVSEEPMDPKLIDQTEHPGPLPETVVAHLDKSHICVHTYPESHPEGGLCTFRADIEVSTCGVISPLKALNYLIHQLESDIVTIDYRVRGFTRDVNGMKHFIDHEINSIQNFMSEDMKSLYDMVDVNVYQENIFHTKMLLKEFDLKHYMFHTKPEDLTETERQEITAALWKEMREIYYGRNMPAV.

Serine 112 (schiff-base intermediate with substrate; via pyruvic acid) is an active-site residue. Pyruvic acid (Ser); by autocatalysis is present on serine 112. The active-site Proton acceptor; for processing activity is histidine 117. Cysteine 140 acts as the Proton donor; for catalytic activity in catalysis.

It belongs to the prokaryotic AdoMetDC family. Type 2 subfamily. Heterooctamer of four alpha and four beta chains arranged as a tetramer of alpha/beta heterodimers. Pyruvate serves as cofactor. Post-translationally, is synthesized initially as an inactive proenzyme. Formation of the active enzyme involves a self-maturation process in which the active site pyruvoyl group is generated from an internal serine residue via an autocatalytic post-translational modification. Two non-identical subunits are generated from the proenzyme in this reaction, and the pyruvate is formed at the N-terminus of the alpha chain, which is derived from the carboxyl end of the proenzyme. The post-translation cleavage follows an unusual pathway, termed non-hydrolytic serinolysis, in which the side chain hydroxyl group of the serine supplies its oxygen atom to form the C-terminus of the beta chain, while the remainder of the serine residue undergoes an oxidative deamination to produce ammonia and the pyruvoyl group blocking the N-terminus of the alpha chain.

It carries out the reaction S-adenosyl-L-methionine + H(+) = S-adenosyl 3-(methylsulfanyl)propylamine + CO2. The protein operates within amine and polyamine biosynthesis; S-adenosylmethioninamine biosynthesis; S-adenosylmethioninamine from S-adenosyl-L-methionine: step 1/1. In terms of biological role, catalyzes the decarboxylation of S-adenosylmethionine to S-adenosylmethioninamine (dcAdoMet), the propylamine donor required for the synthesis of the polyamines spermine and spermidine from the diamine putrescine. This Salmonella arizonae (strain ATCC BAA-731 / CDC346-86 / RSK2980) protein is S-adenosylmethionine decarboxylase proenzyme.